The chain runs to 243 residues: 1-(5-phosphoribosyl)-5-[(5-phosphoribosylamino)methylideneamino] imidazole-4-carboxamide isomerase (243 aa).

D8 serves as the catalytic Proton acceptor. Residue D129 is the Proton donor of the active site.

It belongs to the HisA/HisF family.

It localises to the cytoplasm. The catalysed reaction is 1-(5-phospho-beta-D-ribosyl)-5-[(5-phospho-beta-D-ribosylamino)methylideneamino]imidazole-4-carboxamide = 5-[(5-phospho-1-deoxy-D-ribulos-1-ylimino)methylamino]-1-(5-phospho-beta-D-ribosyl)imidazole-4-carboxamide. Its pathway is amino-acid biosynthesis; L-histidine biosynthesis; L-histidine from 5-phospho-alpha-D-ribose 1-diphosphate: step 4/9. In Brucella suis biovar 1 (strain 1330), this protein is 1-(5-phosphoribosyl)-5-[(5-phosphoribosylamino)methylideneamino] imidazole-4-carboxamide isomerase.